The following is a 212-amino-acid chain: Peptide methionine sulfoxide reductase MsrA (212 aa).

Residue Cys-52 is part of the active site.

This sequence belongs to the MsrA Met sulfoxide reductase family.

The enzyme catalyses L-methionyl-[protein] + [thioredoxin]-disulfide + H2O = L-methionyl-(S)-S-oxide-[protein] + [thioredoxin]-dithiol. The catalysed reaction is [thioredoxin]-disulfide + L-methionine + H2O = L-methionine (S)-S-oxide + [thioredoxin]-dithiol. Its function is as follows. Has an important function as a repair enzyme for proteins that have been inactivated by oxidation. Catalyzes the reversible oxidation-reduction of methionine sulfoxide in proteins to methionine. The chain is Peptide methionine sulfoxide reductase MsrA from Salmonella newport (strain SL254).